Here is an 837-residue protein sequence, read N- to C-terminus: Probable aldehyde oxidase 4 (837 aa).

Residues E9–L98 form the 2Fe-2S ferredoxin-type domain. [2Fe-2S] cluster-binding residues include C50, C55, C58, and C80. The FAD-binding PCMH-type domain occupies I240 to S427.

This sequence belongs to the xanthine dehydrogenase family. Aldehyde oxidases (AO) are homodimers and heterodimers of AO subunits. The cofactor is [2Fe-2S] cluster. It depends on FAD as a cofactor. Mo-molybdopterin serves as cofactor.

The catalysed reaction is an aldehyde + O2 + H2O = a carboxylate + H2O2 + H(+). This Oryza sativa subsp. japonica (Rice) protein is Probable aldehyde oxidase 4.